A 493-amino-acid chain; its full sequence is Tripartite motif-containing protein 5 (493 aa).

An N-acetylalanine modification is found at alanine 2. An RING-type zinc finger spans residues 15–59; that stretch reads CPICLELLTQPLSLDCGHSFCQACLTANHEKSMLDKGESSCPVCR. The residue at position 86 (serine 86) is a Phosphoserine. The B box-type zinc finger occupies 90-132; sequence QKVDHCARHGEKLLLFCQEDGKVICWLCERSQEHRGHHTFLTE. Zn(2+)-binding residues include cysteine 95, histidine 98, cysteine 117, and histidine 123. Residues 131–240 are a coiled coil; sequence TEEVAQECQV…LISDLEHRLQ (110 aa). The required for interaction with GABARAP and for autophagy stretch occupies residues 185-198; sequence FEQLRDILDWEESN. Residues 281-493 form the B30.2/SPRY domain; sequence LKGMLEVFRE…VPMTLCSPSS (213 aa).

It belongs to the TRIM/RBCC family. In terms of assembly, can form homodimers and homotrimers. In addition to lower-order dimerization, also exhibits a higher-order multimerization and both low- and high-order multimerizations are essential for its restriction activity. Interacts with BTBD1 and BTBD2. Interacts with PSMC4, PSMC5, PSMD7 and HSPA8/HSC70. Interacts (via B30.2/SPRY domain) with HSPA1A/B. Interacts with PSMC2, MAP3K7/TAK1, TAB2 and TAB3. Interacts with SQSTM1. Interacts with TRIM6 and TRIM34. Interacts with ULK1 (phosphorylated form), GABARAP, GABARAPL1, GABARAPL2, MAP1LC3A, MAP1LC3C and BECN1. Post-translationally, degraded in a proteasome-independent fashion in the absence of viral infection but in a proteasome-dependent fashion following exposure to restriction sensitive virus. In terms of processing, autoubiquitinated in a RING finger- and UBE2D2-dependent manner. Monoubiquitinated by TRIM21. Deubiquitinated by Yersinia YopJ. Ubiquitination may not lead to proteasomal degradation.

It localises to the cytoplasm. The protein resides in the nucleus. The enzyme catalyses S-ubiquitinyl-[E2 ubiquitin-conjugating enzyme]-L-cysteine + [acceptor protein]-L-lysine = [E2 ubiquitin-conjugating enzyme]-L-cysteine + N(6)-ubiquitinyl-[acceptor protein]-L-lysine.. It functions in the pathway protein modification; protein ubiquitination. In terms of biological role, capsid-specific restriction factor that prevents infection from non-host-adapted retroviruses. Blocks viral replication early in the life cycle, after viral entry but before reverse transcription. In addition to acting as a capsid-specific restriction factor, also acts as a pattern recognition receptor that activates innate immune signaling in response to the retroviral capsid lattice. Binding to the viral capsid triggers its E3 ubiquitin ligase activity, and in concert with the heterodimeric ubiquitin conjugating enzyme complex UBE2V1-UBE2N (also known as UBC13-UEV1A complex) generates 'Lys-63'-linked polyubiquitin chains, which in turn are catalysts in the autophosphorylation of the MAP3K7/TAK1 complex (includes TAK1, TAB2, and TAB3). Activation of the MAP3K7/TAK1 complex by autophosphorylation results in the induction and expression of NF-kappa-B and MAPK-responsive inflammatory genes, thereby leading to an innate immune response in the infected cell. Plays a role in regulating autophagy through activation of autophagy regulator BECN1 by causing its dissociation from its inhibitors BCL2 and TAB2. The protein is Tripartite motif-containing protein 5 (TRIM5) of Gorilla gorilla gorilla (Western lowland gorilla).